A 275-amino-acid chain; its full sequence is Calcyphosin (275 aa).

Positions 59 to 87 (PGTTQLTQGPAGRTLGQTQASCPEPRPSM) are disordered. EF-hand domains are found at residues 107–142 (SGIQGLARFFRQLDRDGSRSLDADEFRQGLAKLGLV), 143–178 (LDQAEAEGVCRKWDRNGSGTLDLEEFLRALRPPMSQ), 179–214 (AREAVIAAAFAKLDRSGDGVVTVDDLRGVYSGRAHP), and 222–258 (TEDEVLRRFLDNFDSSEKDGQVTLAEFQDYYSGVSAS). Ca(2+) is bound by residues D120, D122, S124, S126, E131, D156, N158, S160, T162, E167, D192, S194, D196, and D203. S126 carries the phosphoserine; by PKA modification.

As to quaternary structure, monomer. Does not form oligomers in the presence of calcium.

The protein localises to the cytoplasm. Its function is as follows. Calcium-binding protein. May play a role in cellular signaling events (Potential). The polypeptide is Calcyphosin (Homo sapiens (Human)).